We begin with the raw amino-acid sequence, 228 residues long: Cytidylate kinase (228 aa).

An ATP-binding site is contributed by 17-25 (GPTASGKGT).

The protein belongs to the cytidylate kinase family. Type 1 subfamily.

The protein localises to the cytoplasm. It catalyses the reaction CMP + ATP = CDP + ADP. It carries out the reaction dCMP + ATP = dCDP + ADP. In Burkholderia mallei (strain NCTC 10247), this protein is Cytidylate kinase.